Consider the following 105-residue polypeptide: Protein Rev (105 aa).

Ser5 is modified (phosphoserine; by host CK2). The tract at residues 18–26 (IIKILYQSN) is homomultimerization. The span at 24-35 (QSNPYPDSSQGT) shows a compositional bias: polar residues. Disordered regions lie at residues 24–49 (QSNP…WRAR) and 65–105 (LGGP…ATTE). The short motif at 35-51 (TRQARRNRRRRWRARQR) is the Nuclear localization signal and RNA-binding (RRE) element. Basic residues predominate over residues 37–49 (QARRNRRRRWRAR). The Nuclear export signal and binding to XPO1 motif lies at 74-85 (LPLPPLGRLTLD). Residues 95 to 105 (TESQQGTATTE) show a composition bias toward polar residues.

Belongs to the HIV-1 REV protein family. In terms of assembly, homomultimer; when bound to the RRE. Multimeric assembly is essential for activity and may involve XPO1. Binds to human KPNB1, XPO1, TNPO1, RANBP5 and IPO7. Interacts with the viral Integrase. Interacts with human KHDRBS1. Interacts with human NAP1; this interaction decreases Rev multimerization and stimulates its activity. Interacts with human DEAD-box helicases DDX3 and DDX24; these interactions may serve for viral RNA export to the cytoplasm and packaging, respectively. Interacts with human PSIP1; this interaction may inhibit HIV-1 DNA integration by promoting dissociation of the Integrase-LEDGF/p75 complex. Asymmetrically arginine dimethylated at one site by host PRMT6. Methylation impairs the RNA-binding activity and export of viral RNA from the nucleus to the cytoplasm. Post-translationally, phosphorylated by protein kinase CK2. Presence of, and maybe binding to the N-terminus of the regulatory beta subunit of CK2 is necessary for CK2-mediated Rev's phosphorylation.

The protein localises to the host nucleus. It is found in the host nucleolus. It localises to the host cytoplasm. Escorts unspliced or incompletely spliced viral pre-mRNAs (late transcripts) out of the nucleus of infected cells. These pre-mRNAs carry a recognition sequence called Rev responsive element (RRE) located in the env gene, that is not present in fully spliced viral mRNAs (early transcripts). This function is essential since most viral proteins are translated from unspliced or partially spliced pre-mRNAs which cannot exit the nucleus by the pathway used by fully processed cellular mRNAs. Rev itself is translated from a fully spliced mRNA that readily exits the nucleus. Rev's nuclear localization signal (NLS) binds directly to KPNB1/Importin beta-1 without previous binding to KPNA1/Importin alpha-1. KPNB1 binds to the GDP bound form of RAN (Ran-GDP) and targets Rev to the nucleus. In the nucleus, the conversion from Ran-GDP to Ran-GTP dissociates Rev from KPNB1 and allows Rev's binding to the RRE in viral pre-mRNAs. Rev multimerization on the RRE via cooperative assembly exposes its nuclear export signal (NES) to the surface. Rev can then form a complex with XPO1/CRM1 and Ran-GTP, leading to nuclear export of the complex. Conversion from Ran-GTP to Ran-GDP mediates dissociation of the Rev/RRE/XPO1/RAN complex, so that Rev can return to the nucleus for a subsequent round of export. Beside KPNB1, also seems to interact with TNPO1/Transportin-1, RANBP5/IPO5 and IPO7/RANBP7 for nuclear import. The nucleoporin-like HRB/RIP is an essential cofactor that probably indirectly interacts with Rev to release HIV RNAs from the perinuclear region to the cytoplasm. The chain is Protein Rev from Homo sapiens (Human).